The chain runs to 104 residues: Phycoerythrin alpha-2 chain, chloroplastic (104 aa).

Residues methionine 1–methionine 37 constitute a chloroplast transit peptide. Position 41 is a 5-hydroxylysine (lysine 41). 15,16-dihydrobiliverdin is bound by residues cysteine 56 and arginine 58. The tract at residues lysine 61–tyrosine 63 is 15,16-dihydrobiliverdin chromophore. Residue lysine 78 participates in 15,16-dihydrobiliverdin binding.

This sequence belongs to the phycoerythrin family. In terms of assembly, heterotetramer of 2 different alpha chains and 2 identical beta chains. The subunit composition could comprise of any combination of 2 out of 4 different alpha units with an invariant beta unit. In terms of processing, contains one covalently linked 15,16-dihydrobiliverdin chromophore.

The protein resides in the plastid. It is found in the chloroplast thylakoid membrane. Light-harvesting photosynthetic tetrapyrrole chromophore-protein from the phycobiliprotein complex. The chain is Phycoerythrin alpha-2 chain, chloroplastic (cpeA2) from Rhodomonas sp. (strain CS 24) (Chroomonas sp. (strain CS24)).